We begin with the raw amino-acid sequence, 243 residues long: UMP-CMP kinase 2 (243 aa).

69 to 74 contacts ATP; that stretch reads GSGKGT. Residues 89-118 form an NMP region; it reads SAGDLLRSEISTGREKGELILNIIKEGKIV. A ribonucleoside 5'-phosphate-binding positions include Arg-95, 116-118, and 143-146; these read KIV and GFPR. Asn-150 lines the CMP pocket. Residues 181–189 are LID; that stretch reads GRNQGRVDD. An ATP-binding site is contributed by Arg-182. Residues Arg-186 and Arg-197 each coordinate a ribonucleoside 5'-phosphate.

This sequence belongs to the adenylate kinase family. UMP-CMP kinase subfamily. As to quaternary structure, monomer. Requires Mg(2+) as cofactor.

It localises to the cytoplasm. The protein localises to the nucleus. It carries out the reaction UMP + ATP = UDP + ADP. The enzyme catalyses CMP + ATP = CDP + ADP. It catalyses the reaction dCMP + ATP = dCDP + ADP. Its function is as follows. Catalyzes the phosphorylation of pyrimidine nucleoside monophosphates at the expense of ATP. Plays an important role in de novo pyrimidine nucleotide biosynthesis. Has preference for UMP and CMP as phosphate acceptors. This Oryza sativa subsp. japonica (Rice) protein is UMP-CMP kinase 2.